Reading from the N-terminus, the 450-residue chain is Phosphoglucosamine mutase (450 aa).

Residue S101 is the Phosphoserine intermediate of the active site. 4 residues coordinate Mg(2+): S101, D240, D242, and D244. Residue S101 is modified to Phosphoserine.

This sequence belongs to the phosphohexose mutase family. Requires Mg(2+) as cofactor. Post-translationally, activated by phosphorylation.

The catalysed reaction is alpha-D-glucosamine 1-phosphate = D-glucosamine 6-phosphate. Its function is as follows. Catalyzes the conversion of glucosamine-6-phosphate to glucosamine-1-phosphate. This chain is Phosphoglucosamine mutase, found in Streptococcus pneumoniae (strain Hungary19A-6).